The sequence spans 294 residues: Elongation factor Ts, mitochondrial 2 (294 aa).

The protein belongs to the EF-Ts family.

The protein localises to the mitochondrion. In terms of biological role, associates with the EF-Tu.GDP complex and induces the exchange of GDP to GTP. It remains bound to the aminoacyl-tRNA.EF-Tu.GTP complex up to the GTP hydrolysis stage on the ribosome. This Paramecium tetraurelia protein is Elongation factor Ts, mitochondrial 2.